We begin with the raw amino-acid sequence, 158 residues long: Globin CTT-I/CTT-IA (158 aa).

An N-terminal signal peptide occupies residues 1–15 (MKFLILALCVAAAMA). A Globin domain is found at 16–158 (GPSGDQIAAA…FVFSTLKNEL (143 aa)). Residues histidine 74 and histidine 109 each coordinate heme b.

It belongs to the globin family. As to quaternary structure, monomer.

The protein is Globin CTT-I/CTT-IA (CTT-1) of Chironomus thummi thummi (Midge).